A 257-amino-acid chain; its full sequence is Snake venom serine protease KN10 (257 aa).

The N-terminal stretch at 1–18 (MVLIRVLANLLILQLSYA) is a signal peptide. A propeptide spanning residues 19-24 (QKSSEL) is cleaved from the precursor. The Peptidase S1 domain maps to 25-248 (VVGGDECNIN…HLDWIKSIIA (224 aa)). Disulfide bonds link cysteine 31–cysteine 162, cysteine 49–cysteine 65, cysteine 141–cysteine 209, cysteine 173–cysteine 188, and cysteine 199–cysteine 224. The Charge relay system role is filled by histidine 64. Asparagine 102 carries N-linked (GlcNAc...) asparagine glycosylation. Aspartate 109 acts as the Charge relay system in catalysis. Residues asparagine 120 and asparagine 121 are each glycosylated (N-linked (GlcNAc...) asparagine). Serine 203 serves as the catalytic Charge relay system.

The protein belongs to the peptidase S1 family. Snake venom subfamily. As to quaternary structure, monomer. Expressed by the venom gland.

The protein localises to the secreted. Its function is as follows. Snake venom serine protease that may act in the hemostasis system of the prey. The protein is Snake venom serine protease KN10 of Trimeresurus stejnegeri (Chinese green tree viper).